A 540-amino-acid chain; its full sequence is Chaperonin GroEL (540 aa).

ATP-binding positions include 30-33 (TLGP), lysine 51, 87-91 (DGTTT), glycine 415, and aspartate 495.

The protein belongs to the chaperonin (HSP60) family. As to quaternary structure, forms a cylinder of 14 subunits composed of two heptameric rings stacked back-to-back. Interacts with the co-chaperonin GroES.

The protein localises to the cytoplasm. The enzyme catalyses ATP + H2O + a folded polypeptide = ADP + phosphate + an unfolded polypeptide.. In terms of biological role, together with its co-chaperonin GroES, plays an essential role in assisting protein folding. The GroEL-GroES system forms a nano-cage that allows encapsulation of the non-native substrate proteins and provides a physical environment optimized to promote and accelerate protein folding. This chain is Chaperonin GroEL, found in Serratia ficaria.